Reading from the N-terminus, the 177-residue chain is Putative adenylate kinase (177 aa).

Positions 10, 12, 13, 14, and 15 each coordinate ATP. The segment at 30 to 50 (NLRDYALEKGIGEMKENELEI) is NMP. The LID stretch occupies residues 99-109 (ERGYGREKLGE). The ATP site is built by Arg-100 and Lys-138.

This sequence belongs to the adenylate kinase family. AK6 subfamily. In terms of assembly, interacts with uS11. Not a structural component of 40S pre-ribosomes, but transiently interacts with them by binding to uS11.

It carries out the reaction AMP + ATP = 2 ADP. The catalysed reaction is ATP + H2O = ADP + phosphate + H(+). Broad-specificity nucleoside monophosphate (NMP) kinase that catalyzes the reversible transfer of the terminal phosphate group between nucleoside triphosphates and monophosphates. Also has ATPase activity. Involved in the late maturation steps of the 30S ribosomal particles, specifically 16S rRNA maturation. While NMP activity is not required for ribosome maturation, ATPase activity is. Associates transiently with small ribosomal subunit protein uS11. ATP hydrolysis breaks the interaction with uS11. May temporarily remove uS11 from the ribosome to enable a conformational change of the ribosomal RNA that is needed for the final maturation step of the small ribosomal subunit. The protein is Putative adenylate kinase of Thermococcus kodakarensis (strain ATCC BAA-918 / JCM 12380 / KOD1) (Pyrococcus kodakaraensis (strain KOD1)).